A 70-amino-acid polypeptide reads, in one-letter code: NAD(P)H-quinone oxidoreductase subunit L (70 aa).

2 consecutive transmembrane segments (helical) span residues 2 to 22 and 39 to 59; these read IVPL…PVAL and TFMY…SPFV.

Belongs to the complex I NdhL subunit family. In terms of assembly, NDH-1 can be composed of about 15 different subunits; different subcomplexes with different compositions have been identified which probably have different functions.

The protein localises to the cellular thylakoid membrane. The catalysed reaction is a plastoquinone + NADH + (n+1) H(+)(in) = a plastoquinol + NAD(+) + n H(+)(out). It carries out the reaction a plastoquinone + NADPH + (n+1) H(+)(in) = a plastoquinol + NADP(+) + n H(+)(out). In terms of biological role, NDH-1 shuttles electrons from an unknown electron donor, via FMN and iron-sulfur (Fe-S) centers, to quinones in the respiratory and/or the photosynthetic chain. The immediate electron acceptor for the enzyme in this species is believed to be plastoquinone. Couples the redox reaction to proton translocation, and thus conserves the redox energy in a proton gradient. Cyanobacterial NDH-1 also plays a role in inorganic carbon-concentration. This is NAD(P)H-quinone oxidoreductase subunit L from Trichormus variabilis (strain ATCC 29413 / PCC 7937) (Anabaena variabilis).